Consider the following 76-residue polypeptide: Exodeoxyribonuclease 7 small subunit (76 aa).

This sequence belongs to the XseB family. Heterooligomer composed of large and small subunits.

The protein localises to the cytoplasm. It catalyses the reaction Exonucleolytic cleavage in either 5'- to 3'- or 3'- to 5'-direction to yield nucleoside 5'-phosphates.. In terms of biological role, bidirectionally degrades single-stranded DNA into large acid-insoluble oligonucleotides, which are then degraded further into small acid-soluble oligonucleotides. In Staphylococcus epidermidis (strain ATCC 35984 / DSM 28319 / BCRC 17069 / CCUG 31568 / BM 3577 / RP62A), this protein is Exodeoxyribonuclease 7 small subunit.